Here is a 902-residue protein sequence, read N- to C-terminus: Protein NrfI (902 aa).

The next 10 helical transmembrane spans lie at 9–29 (YITL…ATFI), 75–95 (FLFH…RYLG), 300–320 (VTYL…LDPT), 335–355 (LSLL…YAQS), 602–622 (LVLG…PPLA), 659–679 (DTYE…LLFF), 731–751 (SYGF…LFIL), 772–792 (VSLI…GIWA), 832–852 (YLFS…YFGV), and 868–888 (LPIP…SLIA).

It in the C-terminal section; belongs to the CcmF/CycK/Ccl1/NrfE/CcsA family.

The protein localises to the cell membrane. Its function is as follows. May play a role in cytochrome c biogenesis and may be required for maturation of the NrfA protein. The polypeptide is Protein NrfI (nrfI) (Wolinella succinogenes (strain ATCC 29543 / DSM 1740 / CCUG 13145 / JCM 31913 / LMG 7466 / NCTC 11488 / FDC 602W) (Vibrio succinogenes)).